The following is a 505-amino-acid chain: Maturase K (505 aa).

It belongs to the intron maturase 2 family. MatK subfamily.

Its subcellular location is the plastid. It is found in the chloroplast. Usually encoded in the trnK tRNA gene intron. Probably assists in splicing its own and other chloroplast group II introns. This chain is Maturase K, found in Morus alba (White mulberry).